The sequence spans 394 residues: MKTQVAIIGAGPSGLLLGQLLHKAGIDNVILERQTPDYVLGRIRAGVLEQGMVDLLREAGVDRRMARDGLVHEGVEIAFAGQRRRIDLKRLSGGKTVTVYGQTEVTRDLMEAREACGATTVYQAAEVRLHDLQGERPYVTFERDGERLRLDCDYIAGCDGFHGISRQSIPAERLKVFERVYPFGWLGLLADTPPVSHELIYANHPRGFALCSQRSATRSRYYVQVPLSEKVEDWSDERFWTELKARLPSEVAEKLVTGPSLEKSIAPLRSFVVEPMQHGRLFLAGDAAHIVPPTGAKGLNLAASDVSTLYRLLLKAYREGRGELLERYSAICLRRIWKAERFSWWMTSVLHRFPDTDAFSQRIQQTELEYYLGSEAGLATIAENYVGLPYEEIE.

FAD-binding positions include serine 13, glutamate 32, 42 to 47, and glutamine 102; that span reads RIRAGV. Residues tyrosine 201, 212–214, and tyrosine 222 each bind substrate; that span reads SQR. Aspartate 286 contributes to the FAD binding site. Substrate is bound at residue proline 293. 299–300 serves as a coordination point for FAD; that stretch reads LN.

This sequence belongs to the aromatic-ring hydroxylase family. Homodimer. Requires FAD as cofactor.

The catalysed reaction is 4-hydroxybenzoate + NADPH + O2 + H(+) = 3,4-dihydroxybenzoate + NADP(+) + H2O. The protein operates within aromatic compound metabolism; benzoate degradation via hydroxylation; 3,4-dihydroxybenzoate from benzoate: step 2/2. Functionally, catalyzes the incorporation of an atom of dioxygen into p-hydroxybenzoate (p-OHB) to form 3,4-dihydroxybenzoate (3,4DOHB). The reaction occurs in two parts: reduction of the flavin adenine dinucleotide (FAD) in the enzyme by reduced nicotinamide adenine dinucleotide phosphate (NADPH) in response to binding p-hydroxybenzoate to the enzyme and oxidation of reduced FAD with oxygen to form a hydroperoxide, which then oxygenates p-hydroxybenzoate. In Pseudomonas aeruginosa (strain ATCC 15692 / DSM 22644 / CIP 104116 / JCM 14847 / LMG 12228 / 1C / PRS 101 / PAO1), this protein is p-hydroxybenzoate hydroxylase.